A 60-amino-acid polypeptide reads, in one-letter code: Ribosome biogenesis protein Nop10 (60 aa).

Positions 37–60 are disordered; sequence APAPFDPADPHGKYRRALKERRRL. Over residues 49–60 the composition is skewed to basic residues; it reads KYRRALKERRRL.

Belongs to the NOP10 family.

Its function is as follows. Involved in ribosome biogenesis; more specifically in 18S rRNA pseudouridylation and in cleavage of pre-rRNA. This chain is Ribosome biogenesis protein Nop10, found in Halobacterium salinarum (strain ATCC 29341 / DSM 671 / R1).